The chain runs to 305 residues: UDP-3-O-acyl-N-acetylglucosamine deacetylase (305 aa).

3 residues coordinate Zn(2+): H78, H237, and D241. H264 (proton donor) is an active-site residue.

The protein belongs to the LpxC family. Zn(2+) is required as a cofactor.

It carries out the reaction a UDP-3-O-[(3R)-3-hydroxyacyl]-N-acetyl-alpha-D-glucosamine + H2O = a UDP-3-O-[(3R)-3-hydroxyacyl]-alpha-D-glucosamine + acetate. The protein operates within glycolipid biosynthesis; lipid IV(A) biosynthesis; lipid IV(A) from (3R)-3-hydroxytetradecanoyl-[acyl-carrier-protein] and UDP-N-acetyl-alpha-D-glucosamine: step 2/6. In terms of biological role, catalyzes the hydrolysis of UDP-3-O-myristoyl-N-acetylglucosamine to form UDP-3-O-myristoylglucosamine and acetate, the committed step in lipid A biosynthesis. This is UDP-3-O-acyl-N-acetylglucosamine deacetylase from Ralstonia pickettii (strain 12J).